The following is a 284-amino-acid chain: Phosphatidylglycerol--prolipoprotein diacylglyceryl transferase (284 aa).

A run of 7 helical transmembrane segments spans residues 19-39, 60-80, 98-118, 130-150, 199-219, 225-245, and 258-278; these read ISFY…MWFL, LLYL…VLFY, GGMS…WFSY, FIVP…FING, QLYE…IFSC, GSIS…IEFF, and FITL…IIMY. Arg143 contacts a 1,2-diacyl-sn-glycero-3-phospho-(1'-sn-glycerol).

Belongs to the Lgt family.

Its subcellular location is the cell inner membrane. The enzyme catalyses L-cysteinyl-[prolipoprotein] + a 1,2-diacyl-sn-glycero-3-phospho-(1'-sn-glycerol) = an S-1,2-diacyl-sn-glyceryl-L-cysteinyl-[prolipoprotein] + sn-glycerol 1-phosphate + H(+). The protein operates within protein modification; lipoprotein biosynthesis (diacylglyceryl transfer). Catalyzes the transfer of the diacylglyceryl group from phosphatidylglycerol to the sulfhydryl group of the N-terminal cysteine of a prolipoprotein, the first step in the formation of mature lipoproteins. This Blochmanniella floridana protein is Phosphatidylglycerol--prolipoprotein diacylglyceryl transferase.